The sequence spans 185 residues: HTH-type transcriptional regulator PuuR (185 aa).

The interval 1–20 (MSDEGLAPGKRLSEIRQQQG) is disordered. An HTH cro/C1-type domain is found at 12 to 66 (LSEIRQQQGLSQRRAAELSGLTHSAISTIEQDKVSPAISTLQKLLKVYGLSLSEF). The segment at residues 23–42 (QRRAAELSGLTHSAISTIEQ) is a DNA-binding region (H-T-H motif). Positions 111–178 (FETYQPGTTT…TSAGICRIIS (68 aa)) constitute a Cupin type-2 domain.

Its pathway is amine and polyamine degradation; putrescine degradation [regulation]. Represses puuA, puuD and puuP. The sequence is that of HTH-type transcriptional regulator PuuR (puuR) from Escherichia coli (strain K12).